The following is a 975-amino-acid chain: Chromosome transmission fidelity protein 18 homolog (975 aa).

Disordered stretches follow at residues 30–83 and 114–141; these read EGAS…KRQV and SEEM…DLAE. Thr51 bears the Phosphothreonine mark. Low complexity predominate over residues 58–77; it reads RGDAASSPAPAASVGSSQGG. Position 64 is a phosphoserine (Ser64). Positions 122–136 are enriched in pro residues; it reads PPDSSPTDITPPPSP. Ser225 bears the Phosphoserine mark. Disordered regions lie at residues 246–276 and 320–346; these read SDTL…GQDA and RPSR…KWKS. 374-381 provides a ligand contact to ATP; sequence GPPGLGKT. Residues 858–896 are disordered; it reads ASARVENSPQVDGSPPGLEGLLGGIGEKGVHRPAPRNHE. A Phosphoserine modification is found at Ser871.

The protein belongs to the activator 1 small subunits family. CTF18 subfamily. Component of the CTF18-RFC complex, which consists of CTF18, CTF8, DCC1, RFC2, RFC3, RFC4 and RFC5. During assembly of the CTF18-RFC complex, CTF18 may first assemble into a subcomplex with RFC2, RFC3, RFC4 and RFC5. CTF18 then interacts directly with CTF8, which in turn interacts with DCC1. The CTF18-RFC complex associates with PCNA and with DNA polymerase POLH. The CTF18-RFC complex does not interact with the Rad9/Rad1/Hus1 complex. CTF18 interacts with SMC1A and RAD21. Interacts with DDX11.

Its subcellular location is the nucleus. Functionally, chromosome cohesion factor involved in sister chromatid cohesion and fidelity of chromosome transmission. Component of one of the cell nuclear antigen loader complexes, CTF18-replication factor C (CTF18-RFC), which consists of CTF18, CTF8, DCC1, RFC2, RFC3, RFC4 and RFC5. The CTF18-RFC complex binds to single-stranded and primed DNAs and has weak ATPase activity that is stimulated by the presence of primed DNA, replication protein A (RPA) and by proliferating cell nuclear antigen (PCNA). The CTF18-RFC complex catalyzes the ATP-dependent loading of PCNA onto primed and gapped DNA. Interacts with and stimulates DNA polymerase POLH. During DNA repair synthesis, involved in loading DNA polymerase POLE at the sites of local damage. The chain is Chromosome transmission fidelity protein 18 homolog (CHTF18) from Homo sapiens (Human).